Consider the following 329-residue polypeptide: Olfactory receptor 5AL1 (329 aa).

At methionine 1–phenylalanine 44 the chain is on the extracellular side. An N-linked (GlcNAc...) asparagine glycan is attached at asparagine 21. The helical transmembrane segment at glycine 45–isoleucine 65 threads the bilayer. The Cytoplasmic portion of the chain corresponds to glutamine 66–threonine 73. The helical transmembrane segment at proline 74–alanine 94 threads the bilayer. Residues proline 95–cysteine 113 are Extracellular-facing. The cysteines at positions 113 and 205 are disulfide-linked. The helical transmembrane segment at alanine 114–methionine 134 threads the bilayer. Over alanine 135–cysteine 157 the chain is Cytoplasmic. The chain crosses the membrane as a helical span at residues isoleucine 158–alanine 178. At threonine 179 to glycine 220 the chain is on the extracellular side. A helical membrane pass occupies residues phenylalanine 221–isoleucine 241. At leucine 242–alanine 253 the chain is on the cytoplasmic side. The helical transmembrane segment at phenylalanine 254–methionine 274 threads the bilayer. Residues tyrosine 275 to aspartate 287 lie on the Extracellular side of the membrane. A helical membrane pass occupies residues lysine 288–leucine 308. At arginine 309–lysine 329 the chain is on the cytoplasmic side.

This sequence belongs to the G-protein coupled receptor 1 family.

The protein resides in the cell membrane. Odorant receptor. The protein is Olfactory receptor 5AL1 (OR5AL1) of Homo sapiens (Human).